The sequence spans 231 residues: Putative cobalt transport protein CbiM 1 (231 aa).

Transmembrane regions (helical) follow at residues 8–28, 41–61, 74–94, 97–117, 138–158, and 175–195; these read LPLQ…AYGI, TLPL…LKMP, GLGA…IVLV, ALFL…SMGI, IVNV…ITSI, and FITF…IEGI.

This sequence belongs to the CbiM family. Forms an energy-coupling factor (ECF) transporter complex composed of an ATP-binding protein (A component, CbiO), a transmembrane protein (T component, CbiQ) and 2 possible substrate-capture proteins (S components, CbiM and CbiN) of unknown stoichimetry.

The protein localises to the cell membrane. The protein operates within cofactor biosynthesis; adenosylcobalamin biosynthesis. In terms of biological role, part of the energy-coupling factor (ECF) transporter complex CbiMNOQ involved in cobalt import. The chain is Putative cobalt transport protein CbiM 1 from Methanosphaerula palustris (strain ATCC BAA-1556 / DSM 19958 / E1-9c).